Consider the following 356-residue polypeptide: ADP-ribosylhydrolase ARH3 (356 aa).

D26, E33, T62, D63, and D64 together coordinate Mg(2+). A substrate-binding site is contributed by D63. Residues K132 to G138, H168, and I260 each bind substrate. Residues D303, D305, and T306 each contribute to the Mg(2+) site.

This sequence belongs to the ADP-ribosylglycohydrolase family. Monomer. Requires Mg(2+) as cofactor. Mn(2+) serves as cofactor.

It localises to the nucleus. The protein localises to the cytoplasm. Its subcellular location is the chromosome. It is found in the mitochondrion matrix. It catalyses the reaction [(1''-&gt;2')-ADP-alpha-D-ribose](n) + H2O = [(1''-&gt;2')-ADP-alpha-D-ribose](n-1) + ADP-D-ribose. It carries out the reaction 1''-O-acetyl-ADP-alpha-D-ribose + H2O = ADP-D-ribose + acetate + H(+). The enzyme catalyses O-(ADP-D-ribosyl)-L-seryl-[protein] + H2O = ADP-D-ribose + L-seryl-[protein]. The catalysed reaction is alpha-NAD(+) + H2O = ADP-D-ribose + nicotinamide + H(+). Its activity is regulated as follows. The protein undergoes a dramatic conformational switch from closed to open states upon substrate-binding, which enables specific substrate recognition for the 1''-O-linkage. The glutamate flap (Glu-33) blocks substrate entrance to Mg(2+) in the unliganded closed state. In presence of substrate, Glu-33 is ejected from the active site: this closed-to-open transition significantly widens the substrate-binding channel and precisely positions the scissile 1''-O-linkage for cleavage while securing tightly 2'- and 3'-hydroxyls of ADP-ribose. Activity is inhibited by calcium. ADP-ribosylhydrolase that preferentially hydrolyzes the scissile alpha-O-linkage attached to the anomeric C1'' position of ADP-ribose and acts on different substrates, such as proteins ADP-ribosylated on serine and threonine, free poly(ADP-ribose) and O-acetyl-ADP-D-ribose. Specifically acts as a serine mono-ADP-ribosylhydrolase by mediating the removal of mono-ADP-ribose attached to serine residues on proteins, thereby playing a key role in DNA damage response. Serine ADP-ribosylation of proteins constitutes the primary form of ADP-ribosylation of proteins in response to DNA damage. Does not hydrolyze ADP-ribosyl-arginine, -cysteine, -diphthamide, or -asparagine bonds. Also able to degrade protein free poly(ADP-ribose), which is synthesized in response to DNA damage: free poly(ADP-ribose) acts as a potent cell death signal and its degradation by ADPRHL2 protects cells from poly(ADP-ribose)-dependent cell death, a process named parthanatos. Also hydrolyzes free poly(ADP-ribose) in mitochondria. Specifically digests O-acetyl-ADP-D-ribose, a product of deacetylation reactions catalyzed by sirtuins. Specifically degrades 1''-O-acetyl-ADP-D-ribose isomer, rather than 2''-O-acetyl-ADP-D-ribose or 3''-O-acetyl-ADP-D-ribose isomers. This is ADP-ribosylhydrolase ARH3 (adprs) from Latimeria chalumnae (Coelacanth).